The primary structure comprises 354 residues: GTPase Obg (354 aa).

In terms of domain architecture, Obg spans 1 to 159; the sequence is MKFVDEVKIH…RDLVLELKLL (159 aa). The OBG-type G domain occupies 160 to 333; that stretch reads ADVGIVGYPN…LLDAVGRALF (174 aa). Residues 166–173, 191–195, 212–215, 283–286, and 314–316 contribute to the GTP site; these read GYPNAGKS, FTTLT, DIPG, TKID, and SAV. 2 residues coordinate Mg(2+): Ser173 and Thr193.

This sequence belongs to the TRAFAC class OBG-HflX-like GTPase superfamily. OBG GTPase family. As to quaternary structure, monomer. Mg(2+) is required as a cofactor.

It localises to the cytoplasm. Its function is as follows. An essential GTPase which binds GTP, GDP and possibly (p)ppGpp with moderate affinity, with high nucleotide exchange rates and a fairly low GTP hydrolysis rate. Plays a role in control of the cell cycle, stress response, ribosome biogenesis and in those bacteria that undergo differentiation, in morphogenesis control. This Anaeromyxobacter dehalogenans (strain 2CP-C) protein is GTPase Obg.